The sequence spans 652 residues: MNKRMNELVALLNRYATEYYTSDNPSVSDSEYDRLYRELVELETAYPEQVLADSPTHRVGGKVLDGFEKYSHQYPLYSLQDAFSREELDAFDARVRKEVAHPTYICELKIDGLSISLTYEKGILVAGVTRGDGSIGENITENLKRVKDIPLTLPEELDITVRGECYMPRASFDQVNQVRQENGEPEFANPRNAAAGTLRQLDTAVVAKRNLATFLYQEASPSTRDSQEKGLKYLEQLGFVVNPKRILAENIDEIWNFIQEVGQERENLPYDIDGVVIKVNDLASQEELGFTVKAPKWAVAYKFPAEEKEAQLLSVDWTVGRTGVVTPTANLTPVQLAGTTVSRATLHNVDYIAEKDIRKDDTVIVYKAGDIIPAVLRVVESKRVSEEKLDIPTNCPSCNSDLLHFEDEVALRCINPRCPAQIMEGLIHFASRDAMNITGLGPSIVEKLFAANLVKDVADIYRLQEEDFLLLEGVKEKSAAKLYQAIQASKENSAEKLLFGLGIRHVGSKVSQLLLQYFHSIENLSQADSEEVASIESLGGVIAKSLQTYFATEGSEILLRELKETGVNLDYKGQTVVADAALSGLTVVLTGKLERLKRSEAKSKLESLGAKVTGSISKKTDLVVVGADAGSKLQKAQELGIQVRDEAWLESL.

Residues 29-33 (DSEYD), 78-79 (SL), and glutamate 107 each bind NAD(+). Catalysis depends on lysine 109, which acts as the N6-AMP-lysine intermediate. NAD(+) contacts are provided by arginine 130, glutamate 164, lysine 278, and lysine 302. Zn(2+) is bound by residues cysteine 395, cysteine 398, cysteine 413, and cysteine 418. A BRCT domain is found at 577–652 (VADAALSGLT…VRDEAWLESL (76 aa)).

It belongs to the NAD-dependent DNA ligase family. LigA subfamily. Requires Mg(2+) as cofactor. Mn(2+) is required as a cofactor.

The enzyme catalyses NAD(+) + (deoxyribonucleotide)n-3'-hydroxyl + 5'-phospho-(deoxyribonucleotide)m = (deoxyribonucleotide)n+m + AMP + beta-nicotinamide D-nucleotide.. DNA ligase that catalyzes the formation of phosphodiester linkages between 5'-phosphoryl and 3'-hydroxyl groups in double-stranded DNA using NAD as a coenzyme and as the energy source for the reaction. It is essential for DNA replication and repair of damaged DNA. The polypeptide is DNA ligase (Streptococcus pneumoniae (strain CGSP14)).